The primary structure comprises 478 residues: Lysine-rich nucleolar protein 1 (478 aa).

Positions 1–231 are disordered; the sequence is MVSKTQKADL…THQEGDILLV (231 aa). Residue lysine 7 forms a Glycyl lysine isopeptide (Lys-Gly) (interchain with G-Cter in SUMO2) linkage. Basic residues predominate over residues 17-27; the sequence is KKKKKKKKKRV. Residues 33 to 45 show a composition bias toward polar residues; it reads EPETQYSVLNSND. Serine 51 and serine 59 each carry phosphoserine. Residues 54-63 are compositionally biased toward polar residues; sequence RATSPSNNVD. Composition is skewed to basic residues over residues 73 to 82 and 120 to 129; these read SKRKKKKKSC and EKKKKRRKSL. A Glycyl lysine isopeptide (Lys-Gly) (interchain with G-Cter in SUMO2) cross-link involves residue lysine 140. Phosphoserine is present on serine 142. Over residues 143–153 the composition is skewed to basic and acidic residues; sequence PDPKHAKEVSK. Basic residues-rich tracts occupy residues 154 to 165 and 204 to 222; these read AGRKSKKQRKEK and QKRK…KKKT. Residue lysine 250 forms a Glycyl lysine isopeptide (Lys-Gly) (interchain with G-Cter in SUMO1); alternate linkage. A Glycyl lysine isopeptide (Lys-Gly) (interchain with G-Cter in SUMO2); alternate cross-link involves residue lysine 250. The tract at residues 258–314 is disordered; that stretch reads PIDSPKAPGKKKVKSKKKVEQPVGEGLAVKRKKKKKKRKENGVKEDPWQEEKEESDT. A Phosphoserine modification is found at serine 261. Residues 265-274 are compositionally biased toward basic residues; it reads PGKKKVKSKK. Glycyl lysine isopeptide (Lys-Gly) (interchain with G-Cter in SUMO2) cross-links involve residues lysine 275 and lysine 287. The segment covering 286-296 has biased composition (basic residues); sequence VKRKKKKKKRK. Positions 297–307 are enriched in basic and acidic residues; the sequence is ENGVKEDPWQE. Residue lysine 309 forms a Glycyl lysine isopeptide (Lys-Gly) (interchain with G-Cter in SUMO2) linkage. Residues 310–478 are interaction with ZNF106; sequence EESDTDLEVV…NASKSIKLQD (169 aa). Serine 312 is modified (phosphoserine). A Phosphothreonine modification is found at threonine 314. Residue lysine 323 forms a Glycyl lysine isopeptide (Lys-Gly) (interchain with G-Cter in SUMO2) linkage. Positions 340-357 are enriched in basic and acidic residues; it reads QEEIDRESGKTEASEPKK. A disordered region spans residues 340 to 378; the sequence is QEEIDRESGKTEASEPKKWTVGLSVKTEASEPKKWTGTQ. Residues lysine 373, lysine 393, lysine 395, lysine 427, and lysine 462 each participate in a glycyl lysine isopeptide (Lys-Gly) (interchain with G-Cter in SUMO2) cross-link.

As to quaternary structure, interacts with ZNF106. In terms of tissue distribution, expressed in testis.

The protein resides in the nucleus. It is found in the nucleolus. The protein is Lysine-rich nucleolar protein 1 (Knop1) of Mus musculus (Mouse).